The chain runs to 658 residues: Sodium/nucleoside cotransporter 1 (658 aa).

The Cytoplasmic portion of the chain corresponds to 1 to 75 (MEKASGRKSL…ARTFCQRHAS (75 aa)). The chain crosses the membrane as a helical span at residues 76–99 (LFKKILLGLLCLAYAAYFLAACIL). Topologically, residues 100-104 (DFQRA) are extracellular. Residues 105 to 123 (LALFVITCLVILVLLLHFL) traverse the membrane as a helical segment. The Cytoplasmic portion of the chain corresponds to 124 to 142 (KKFLGKKLTRCLKPFKNSQ). Residues 143–162 (LRLWIKRVFAGVSLVGLILW) traverse the membrane as a helical segment. Over 163–173 (LALDTAQRPEQ) the chain is Extracellular. The helical transmembrane segment at 174–190 (LISFAGICMFVLILFAC) threads the bilayer. Residues 191-196 (SKHHSA) are Cytoplasmic-facing. A helical membrane pass occupies residues 197-217 (VSWRTVFWGLGLQFVFGLLVI). At 218–256 (RTDPGFIAFQWLGDQVQIFLAYTVAGSSFVLGDTLVNDV) the chain is on the extracellular side. A helical membrane pass occupies residues 257–278 (FAFQSLPIIIFFGCVMSILYYL). The Cytoplasmic portion of the chain corresponds to 279-289 (GLVQWVVQKIA). The helical transmembrane segment at 290-313 (WFLQVTMRTTATETLAVAGNIFVG) threads the bilayer. Residues 314–332 (MTEAPLLIRPYLADLTLSE) lie on the Extracellular side of the membrane. A helical membrane pass occupies residues 333 to 355 (IHAVMTSGFATISGTVLGAFISF). Topologically, residues 356–361 (GIDASS) are cytoplasmic. A helical transmembrane segment spans residues 362–381 (LISASVMGAPCALALSKLVY). At 382 to 418 (PEEEESKFKSKEGVKLPRGKESNVLEAASNGATDAIA) the chain is on the extracellular side. A helical membrane pass occupies residues 419–441 (LVANVAANLVAFLAVLAFINAAL). Residues 442 to 452 (SWLGELVDIQG) lie on the Cytoplasmic side of the membrane. The chain crosses the membrane as a helical span at residues 453–474 (LTFQVICSYILRPMVYMMGVEW). The Extracellular portion of the chain corresponds to 475–529 (TDCPMVAEMVGIKFFTNEFVAYQQLSQYKKKRLSGMEEWIDGQKQWISVRAEVIT). A helical membrane pass occupies residues 530 to 553 (TFSLCGFANLSSIGITLGGLTSMV). Residues 554–564 (PHRKSDLSKVV) are Cytoplasmic-facing. A helical transmembrane segment spans residues 565 to 587 (IRALFTGSCVSFISACVAGILYV). Residues 588–658 (PRGAETDCVS…CGFYNNTVCA (71 aa)) lie on the Extracellular side of the membrane. A glycan (N-linked (GlcNAc...) asparagine) is linked at asparagine 653.

This sequence belongs to the concentrative nucleoside transporter (CNT) (TC 2.A.41) family. N-glycosylated. N-glycosylation is required for localization to the plasma membrane and the transporter activity.

It localises to the cell membrane. The protein localises to the apical cell membrane. It carries out the reaction uridine(out) + Na(+)(out) = uridine(in) + Na(+)(in). The catalysed reaction is thymidine(out) + Na(+)(out) = thymidine(in) + Na(+)(in). The enzyme catalyses cytidine(out) + Na(+)(out) = cytidine(in) + Na(+)(in). It catalyses the reaction adenosine(out) + Na(+)(out) = adenosine(in) + Na(+)(in). Its activity is regulated as follows. Due to its high apparent affinity but slow transport, adenosine could act as a negative regulator of pyrimidine transport under some conditions. Its function is as follows. Sodium and pyrimidine nucleoside symporter of the plasma membrane that imports uridine, thymidine and cytidine into cells by coupling their transport to the transmembrane sodium electrochemical gradient. Also transports adenosine, an atypical substrate transported with high apparent affinity, but low maximum velocity. Therefore, exhibits the transport characteristics of the nucleoside transport system cit or N2 subtype (N2/cit). Involved in renal nucleoside (re)absorption. In Oryctolagus cuniculus (Rabbit), this protein is Sodium/nucleoside cotransporter 1 (SLC28A1).